A 549-amino-acid polypeptide reads, in one-letter code: Glucoamylase, intracellular sporulation-specific (549 aa).

Tryptophan 198 serves as a coordination point for substrate. Residue aspartate 261 is the Proton acceptor of the active site. Glutamate 264 serves as the catalytic Proton donor.

It belongs to the glycosyl hydrolase 15 family.

The enzyme catalyses Hydrolysis of terminal (1-&gt;4)-linked alpha-D-glucose residues successively from non-reducing ends of the chains with release of beta-D-glucose.. The sequence is that of Glucoamylase, intracellular sporulation-specific (SGA1) from Saccharomyces cerevisiae (strain ATCC 204508 / S288c) (Baker's yeast).